Consider the following 216-residue polypeptide: Ribosomal RNA small subunit methyltransferase G (216 aa).

S-adenosyl-L-methionine is bound by residues Gly73, Leu78, 124 to 125 (AE), and Arg139.

Belongs to the methyltransferase superfamily. RNA methyltransferase RsmG family.

The protein localises to the cytoplasm. Its function is as follows. Specifically methylates the N7 position of guanine in position 518 of 16S rRNA. The polypeptide is Ribosomal RNA small subunit methyltransferase G (Pseudarthrobacter chlorophenolicus (strain ATCC 700700 / DSM 12829 / CIP 107037 / JCM 12360 / KCTC 9906 / NCIMB 13794 / A6) (Arthrobacter chlorophenolicus)).